The chain runs to 628 residues: RING finger protein 112 (628 aa).

An RING-type zinc finger spans residues 57–98 (CSICLERPREPISLDCGHDFCPRCFSTHRVPGCGPPCCPECR). Positions 132 to 628 (AVRAEPLLLV…GDREPLLQEE (497 aa)) are interaction with ZBTB16. A GB1/RHD3-type G domain is found at 167–409 (DTPVCLLAVL…RCPGYWSEGR (243 aa)). 318–319 (RD) is a binding site for GTP. Helical transmembrane passes span 544–564 (LAAV…GVVG) and 577–597 (GMVA…GGGV).

The protein belongs to the TRAFAC class dynamin-like GTPase superfamily. GB1/RHD3 GTPase family. GB1 subfamily. As to quaternary structure, self-associates. Interacts with SP1 in an oxidative stress-regulated manner. Interacts with SIGMAR1 in an oxidative stress-regulated manner. Interacts with ZBTB16 (via C2H2-type zinc finger domains 1 and 2). In terms of processing, auto-ubiquitinated.

The protein resides in the membrane. It localises to the cytoplasm. The protein localises to the nucleus. It is found in the nuclear body. Its subcellular location is the nucleoplasm. The protein resides in the endosome. It localises to the cytoplasmic vesicle. The protein localises to the secretory vesicle. It is found in the synaptic vesicle. Its subcellular location is the postsynaptic density. The protein resides in the perikaryon. It localises to the cell projection. The protein localises to the neuron projection. It catalyses the reaction S-ubiquitinyl-[E2 ubiquitin-conjugating enzyme]-L-cysteine + [acceptor protein]-L-lysine = [E2 ubiquitin-conjugating enzyme]-L-cysteine + N(6)-ubiquitinyl-[acceptor protein]-L-lysine.. It participates in protein modification; protein ubiquitination. In terms of biological role, E3 ubiquitin-protein ligase that plays an important role in neuronal differentiation, including neurogenesis and gliogenesis, during brain development. During embryonic development initiates neuronal differentiation by inducing cell cycle arrest at the G0/G1 phase through up-regulation of cell-cycle regulatory proteins. Plays a role not only in the fetal period during the development of the nervous system, but also in the adult brain, where it is involved in the maintenance of neural functions and protection of the nervous tissue cells from oxidative stress-induced damage. Exhibits GTPase and E3 ubiquitin-protein ligase activities. Regulates dendritic spine density and synaptic neurotransmission; its ability to hydrolyze GTP is involved in the maintenance of dendritic spine density. This Bos taurus (Bovine) protein is RING finger protein 112 (RNF112).